The chain runs to 416 residues: Dihydroorotase (416 aa).

Residues His-53 and His-55 each coordinate Zn(2+). Substrate-binding positions include 55–57 and Asn-87; that span reads HLR. Residues Asp-145, His-172, His-225, and Asp-298 each contribute to the Zn(2+) site. Asp-298 is a catalytic residue. His-302 is a substrate binding site.

It belongs to the metallo-dependent hydrolases superfamily. DHOase family. Class I DHOase subfamily. It depends on Zn(2+) as a cofactor.

The enzyme catalyses (S)-dihydroorotate + H2O = N-carbamoyl-L-aspartate + H(+). Its pathway is pyrimidine metabolism; UMP biosynthesis via de novo pathway; (S)-dihydroorotate from bicarbonate: step 3/3. Functionally, catalyzes the reversible cyclization of carbamoyl aspartate to dihydroorotate. The polypeptide is Dihydroorotase (Deinococcus radiodurans (strain ATCC 13939 / DSM 20539 / JCM 16871 / CCUG 27074 / LMG 4051 / NBRC 15346 / NCIMB 9279 / VKM B-1422 / R1)).